The chain runs to 183 residues: Ribulose bisphosphate carboxylase small subunit, chloroplastic 5 (183 aa).

The N-terminal 42 residues, 1–42 (MAAAMMNKSVLLNKQCGKPAAVPKVVMSKGGFARTSAVNKNR), are a transit peptide targeting the chloroplast.

Belongs to the RuBisCO small chain family. In terms of assembly, heterohexadecamer of 8 large and 8 small subunits.

The protein resides in the plastid. The protein localises to the chloroplast. RuBisCO catalyzes two reactions: the carboxylation of D-ribulose 1,5-bisphosphate, the primary event in carbon dioxide fixation, as well as the oxidative fragmentation of the pentose substrate. Both reactions occur simultaneously and in competition at the same active site. Although the small subunit is not catalytic it is essential for maximal activity. This Acetabularia acetabulum (Mermaid's wine glass) protein is Ribulose bisphosphate carboxylase small subunit, chloroplastic 5.